We begin with the raw amino-acid sequence, 233 residues long: MVSFTSIVTAVVALAGSALAIPAPDGNMTGFPFEQLMRRQSTPSSTGRHNGYYYSWWTDGASPVQYQNGNGGSYSVQWQSGGNFVGGKGWMPGGSKSITYSGTFNPVNNGNAYLCIYGWTQNPLVEYYILENYGEYNPGNSAQSRGTLQAAGGTYTLHESTRVNQPSIEGTRTFQQYWAIRQQKRNSGTVNTGEFFQAWERAGMRMGNHNYMIVATEGYRSAGNSNINVQTPA.

The signal sequence occupies residues 1–20 (MVSFTSIVTAVVALAGSALA). N-linked (GlcNAc...) asparagine glycosylation is present at Asn-27. Positions 40-230 (QSTPSSTGRH…SAGNSNINVQ (191 aa)) constitute a GH11 domain. The Nucleophile role is filled by Glu-126. The Proton donor role is filled by Glu-217.

The protein belongs to the glycosyl hydrolase 11 (cellulase G) family.

It is found in the secreted. The enzyme catalyses Endohydrolysis of (1-&gt;4)-beta-D-xylosidic linkages in xylans.. Its pathway is glycan degradation; xylan degradation. Functionally, endo-1,4-beta-xylanase involved in the hydrolysis of xylan, a major structural heterogeneous polysaccharide found in plant biomass representing the second most abundant polysaccharide in the biosphere, after cellulose. Accounts for approximately 70 percent of the endoxylanase activity in the culture filtrate. The sequence is that of Endo-1,4-beta-xylanase 1 (XYL1) from Pyricularia grisea (Crabgrass-specific blast fungus).